A 257-amino-acid chain; its full sequence is Type III pantothenate kinase (257 aa).

6–13 (DVGNTNTV) is an ATP binding site. Residues Tyr-102 and 109-112 (GADR) contribute to the substrate site. Asp-111 (proton acceptor) is an active-site residue. Asp-131 contacts K(+). Thr-134 lines the ATP pocket. Substrate is bound at residue Thr-186.

Belongs to the type III pantothenate kinase family. As to quaternary structure, homodimer. The cofactor is NH4(+). K(+) serves as cofactor.

It localises to the cytoplasm. It carries out the reaction (R)-pantothenate + ATP = (R)-4'-phosphopantothenate + ADP + H(+). It participates in cofactor biosynthesis; coenzyme A biosynthesis; CoA from (R)-pantothenate: step 1/5. In terms of biological role, catalyzes the phosphorylation of pantothenate (Pan), the first step in CoA biosynthesis. This chain is Type III pantothenate kinase, found in Leptospira interrogans serogroup Icterohaemorrhagiae serovar copenhageni (strain Fiocruz L1-130).